The chain runs to 191 residues: NADH-quinone oxidoreductase subunit B (191 aa).

Residues cysteine 52, cysteine 53, cysteine 118, and cysteine 148 each coordinate [4Fe-4S] cluster.

It belongs to the complex I 20 kDa subunit family. NDH-1 is composed of 14 different subunits. Subunits NuoB, C, D, E, F, and G constitute the peripheral sector of the complex. The cofactor is [4Fe-4S] cluster.

It localises to the cell inner membrane. It catalyses the reaction a quinone + NADH + 5 H(+)(in) = a quinol + NAD(+) + 4 H(+)(out). Functionally, NDH-1 shuttles electrons from NADH, via FMN and iron-sulfur (Fe-S) centers, to quinones in the respiratory chain. The immediate electron acceptor for the enzyme in this species is believed to be a menaquinone. Couples the redox reaction to proton translocation (for every two electrons transferred, four hydrogen ions are translocated across the cytoplasmic membrane), and thus conserves the redox energy in a proton gradient. This is NADH-quinone oxidoreductase subunit B from Azobacteroides pseudotrichonymphae genomovar. CFP2.